A 430-amino-acid polypeptide reads, in one-letter code: Glutamate-1-semialdehyde 2,1-aminomutase (430 aa).

Lys267 carries the N6-(pyridoxal phosphate)lysine modification.

It belongs to the class-III pyridoxal-phosphate-dependent aminotransferase family. HemL subfamily. As to quaternary structure, homodimer. Requires pyridoxal 5'-phosphate as cofactor.

It localises to the cytoplasm. It catalyses the reaction (S)-4-amino-5-oxopentanoate = 5-aminolevulinate. It functions in the pathway porphyrin-containing compound metabolism; protoporphyrin-IX biosynthesis; 5-aminolevulinate from L-glutamyl-tRNA(Glu): step 2/2. This chain is Glutamate-1-semialdehyde 2,1-aminomutase, found in Anaeromyxobacter dehalogenans (strain 2CP-C).